The primary structure comprises 482 residues: tRNA sulfurtransferase (482 aa).

The region spanning 61 to 165 is the THUMP domain; the sequence is AAIVAELTRI…DERLILVTAR (105 aa). ATP is bound by residues 183-184, K265, G287, and Q296; that span reads LI. A disulfide bridge links C344 with C456. A Rhodanese domain is found at 404 to 482; it reads FSHNDVILDI…GFKNVKVYRP (79 aa). C456 functions as the Cysteine persulfide intermediate in the catalytic mechanism.

This sequence belongs to the ThiI family.

It is found in the cytoplasm. The catalysed reaction is [ThiI sulfur-carrier protein]-S-sulfanyl-L-cysteine + a uridine in tRNA + 2 reduced [2Fe-2S]-[ferredoxin] + ATP + H(+) = [ThiI sulfur-carrier protein]-L-cysteine + a 4-thiouridine in tRNA + 2 oxidized [2Fe-2S]-[ferredoxin] + AMP + diphosphate. It carries out the reaction [ThiS sulfur-carrier protein]-C-terminal Gly-Gly-AMP + S-sulfanyl-L-cysteinyl-[cysteine desulfurase] + AH2 = [ThiS sulfur-carrier protein]-C-terminal-Gly-aminoethanethioate + L-cysteinyl-[cysteine desulfurase] + A + AMP + 2 H(+). The protein operates within cofactor biosynthesis; thiamine diphosphate biosynthesis. Its function is as follows. Catalyzes the ATP-dependent transfer of a sulfur to tRNA to produce 4-thiouridine in position 8 of tRNAs, which functions as a near-UV photosensor. Also catalyzes the transfer of sulfur to the sulfur carrier protein ThiS, forming ThiS-thiocarboxylate. This is a step in the synthesis of thiazole, in the thiamine biosynthesis pathway. The sulfur is donated as persulfide by IscS. This chain is tRNA sulfurtransferase, found in Erwinia tasmaniensis (strain DSM 17950 / CFBP 7177 / CIP 109463 / NCPPB 4357 / Et1/99).